Here is a 630-residue protein sequence, read N- to C-terminus: tRNA uridine 5-carboxymethylaminomethyl modification enzyme MnmG (630 aa).

Position 15–20 (15–20 (GAGHAG)) interacts with FAD. 276-290 (GPRYCPSIEDKIVRF) is an NAD(+) binding site.

This sequence belongs to the MnmG family. As to quaternary structure, homodimer. Heterotetramer of two MnmE and two MnmG subunits. FAD serves as cofactor.

The protein localises to the cytoplasm. Its function is as follows. NAD-binding protein involved in the addition of a carboxymethylaminomethyl (cmnm) group at the wobble position (U34) of certain tRNAs, forming tRNA-cmnm(5)s(2)U34. This Latilactobacillus sakei subsp. sakei (strain 23K) (Lactobacillus sakei subsp. sakei) protein is tRNA uridine 5-carboxymethylaminomethyl modification enzyme MnmG.